The following is an 842-amino-acid chain: uncharacterized protein (842 aa).

Disordered regions lie at residues 1 to 20 (MLHFLFHSGSSSNRNSSPKE) and 142 to 209 (NSSS…TSSS). The region spanning 35-422 (TKDVTFRLVL…TAKSFHKCIL (388 aa)) is the uDENN FNIP1/2-type domain. The span at 183–209 (ANLSSSSKNMKDSTLSSQKARSNTSSS) shows a compositional bias: polar residues. The cDENN FNIP1/2-type domain occupies 430-772 (APLIKPSVFS…CYEIHEFPSE (343 aa)). S573 and S590 each carry phosphoserine. The region spanning 777–842 (YAPFLLKEHH…KEVLRVCSHC (66 aa)) is the dDENN FNIP1/2-type domain.

The protein resides in the cytoplasm. This is an uncharacterized protein from Schizosaccharomyces pombe (strain 972 / ATCC 24843) (Fission yeast).